We begin with the raw amino-acid sequence, 70 residues long: Large ribosomal subunit protein eL38 (70 aa).

Residue Lys4 forms a Glycyl lysine isopeptide (Lys-Gly) (interchain with G-Cter in SUMO2) linkage. N6-acetyllysine; alternate is present on Lys9. Lys9 is covalently cross-linked (Glycyl lysine isopeptide (Lys-Gly) (interchain with G-Cter in SUMO2); alternate). Lys67 bears the N6-acetyllysine mark.

Belongs to the eukaryotic ribosomal protein eL38 family. As to quaternary structure, component of the large ribosomal subunit.

It is found in the cytoplasm. Component of the large ribosomal subunit. The ribosome is a large ribonucleoprotein complex responsible for the synthesis of proteins in the cell. This Macaca fascicularis (Crab-eating macaque) protein is Large ribosomal subunit protein eL38 (RPL38).